Here is a 281-residue protein sequence, read N- to C-terminus: Tryptophan synthase alpha chain (281 aa).

Residues E49 and D60 each act as proton acceptor in the active site.

The protein belongs to the TrpA family. Tetramer of two alpha and two beta chains.

The catalysed reaction is (1S,2R)-1-C-(indol-3-yl)glycerol 3-phosphate + L-serine = D-glyceraldehyde 3-phosphate + L-tryptophan + H2O. Its pathway is amino-acid biosynthesis; L-tryptophan biosynthesis; L-tryptophan from chorismate: step 5/5. Functionally, the alpha subunit is responsible for the aldol cleavage of indoleglycerol phosphate to indole and glyceraldehyde 3-phosphate. This is Tryptophan synthase alpha chain from Methanocaldococcus jannaschii (strain ATCC 43067 / DSM 2661 / JAL-1 / JCM 10045 / NBRC 100440) (Methanococcus jannaschii).